The sequence spans 93 residues: Acylphosphatase (93 aa).

The Acylphosphatase-like domain occupies 6–93 (RARIVVSGRV…GDLGAFEIRF (88 aa)). Catalysis depends on residues Arg-21 and Asn-39.

The protein belongs to the acylphosphatase family.

The catalysed reaction is an acyl phosphate + H2O = a carboxylate + phosphate + H(+). The chain is Acylphosphatase (acyP) from Anaeromyxobacter dehalogenans (strain 2CP-C).